We begin with the raw amino-acid sequence, 307 residues long: uncharacterized protein (307 aa).

This is an uncharacterized protein from Acanthamoeba polyphaga mimivirus (APMV).